The sequence spans 1055 residues: MDS1 and EVI1 complex locus protein EVI1-A (1055 aa).

3 C2H2-type zinc fingers span residues tyrosine 21–histidine 48, histidine 75–histidine 97, and tyrosine 103–histidine 125. Residues tyrosine 131–histidine 155 form a C2H2-type 4; degenerate zinc finger. C2H2-type zinc fingers lie at residues histidine 161–histidine 183 and phenylalanine 189–histidine 211. A C2H2-type 7; atypical zinc finger spans residues isoleucine 218 to cysteine 240. 3 disordered regions span residues proline 324–proline 345, phenylalanine 372–aspartate 423, and valine 531–proline 621. Positions glutamate 332 to proline 345 are enriched in polar residues. Residues arginine 381 to serine 392 show a composition bias toward basic and acidic residues. The segment covering serine 399–aspartate 413 has biased composition (polar residues). The Nuclear localization signal motif lies at lysine 422–lysine 435. Positions valine 531 to alanine 566 are enriched in basic and acidic residues. The CTBP-binding motif 1 motif lies at proline 554 to threonine 558. The segment covering asparagine 569–aspartate 583 has biased composition (polar residues). The CTBP-binding motif 2 signature appears at proline 585–serine 589. Residues glycine 591–glutamine 601 are compositionally biased toward polar residues. Over residues threonine 602–proline 621 the composition is skewed to basic and acidic residues. C2H2-type zinc fingers lie at residues tyrosine 734 to histidine 756, tyrosine 762 to histidine 785, and phenylalanine 791 to histidine 813. Disordered stretches follow at residues histidine 813–leucine 837 and serine 922–lysine 957. Over residues glycine 816–histidine 827 the composition is skewed to polar residues. Positions aspartate 944–glutamate 954 are enriched in acidic residues.

Homooligomer. Interacts with ctbp. In terms of tissue distribution, expressed dynamically during embryonic development; in the developing pronephros, specific areas of the brain (forebrain, midbrain and hindbrain), and in the majority of the visceral arch, and head mesenchyme derived from neural crest cells. Within the pronephros, expressed in the ventroposterior region of the pronephros anlagen from stage 20 (and is absent from the splanchnic layer that forms the glomus), then expression becomes restricted to the distal tubule and duct by the tadpole stage. In adults, expressed in various tissues including kidney, lung, testis, spleen and stomach.

Its subcellular location is the nucleus. The protein localises to the nucleus speckle. Functionally, transcriptional repressor during pronephros development. Plays a role in regionalization of the pronephros; may promote formation of the distal tubule and duct over formation of the glomus and proximal tubule. The polypeptide is MDS1 and EVI1 complex locus protein EVI1-A (mecom-a) (Xenopus laevis (African clawed frog)).